A 172-amino-acid chain; its full sequence is Keratin-associated protein 13-3 (172 aa).

5 repeat units span residues 46 to 55 (CQLGSSLYRG), 56 to 65 (CQETCWRPNS), 66 to 75 (CQTLCVESSP), 76 to 85 (CHTSCYYPRT), and 92 to 101 (CLTMHVGSRG). Residues 46–101 (CQLGSSLYRGCQETCWRPNSCQTLCVESSPCHTSCYYPRTHMLCNSCLTMHVGSRG) form a 5 X 10 AA approximate repeats region.

The protein belongs to the PMG family. Interacts with hair keratins.

Functionally, in the hair cortex, hair keratin intermediate filaments are embedded in an interfilamentous matrix, consisting of hair keratin-associated proteins (KRTAP), which are essential for the formation of a rigid and resistant hair shaft through their extensive disulfide bond cross-linking with abundant cysteine residues of hair keratins. The matrix proteins include the high-sulfur and high-glycine-tyrosine keratins. In Homo sapiens (Human), this protein is Keratin-associated protein 13-3 (KRTAP13-3).